Reading from the N-terminus, the 235-residue chain is Ubiquinone/menaquinone biosynthesis C-methyltransferase UbiE (235 aa).

S-adenosyl-L-methionine contacts are provided by Thr59, Asp84, and Ser123.

It belongs to the class I-like SAM-binding methyltransferase superfamily. MenG/UbiE family.

The catalysed reaction is a 2-demethylmenaquinol + S-adenosyl-L-methionine = a menaquinol + S-adenosyl-L-homocysteine + H(+). It carries out the reaction a 2-methoxy-6-(all-trans-polyprenyl)benzene-1,4-diol + S-adenosyl-L-methionine = a 5-methoxy-2-methyl-3-(all-trans-polyprenyl)benzene-1,4-diol + S-adenosyl-L-homocysteine + H(+). It functions in the pathway quinol/quinone metabolism; menaquinone biosynthesis; menaquinol from 1,4-dihydroxy-2-naphthoate: step 2/2. The protein operates within cofactor biosynthesis; ubiquinone biosynthesis. In terms of biological role, methyltransferase required for the conversion of demethylmenaquinol (DMKH2) to menaquinol (MKH2) and the conversion of 2-polyprenyl-6-methoxy-1,4-benzoquinol (DDMQH2) to 2-polyprenyl-3-methyl-6-methoxy-1,4-benzoquinol (DMQH2). The sequence is that of Ubiquinone/menaquinone biosynthesis C-methyltransferase UbiE from Campylobacter jejuni subsp. jejuni serotype O:6 (strain 81116 / NCTC 11828).